A 577-amino-acid chain; its full sequence is Moesin (577 aa).

An FERM domain is found at 2–295 (PKTISVRVTT…GNHELYMRRR (294 aa)). Residue S74 is modified to Phosphoserine. The residue at position 79 (K79) is an N6-acetyllysine. At K83 the chain carries N6-succinyllysine. The short motif at 115-120 (IYCPPE) is the [IL]-x-C-x-x-[DE] motif element. Residue Y116 is modified to Phosphotyrosine. Position 117 is an S-nitrosocysteine (C117). N6-acetyllysine is present on residues K139 and K165. 3 disordered regions span residues 323–342 (LENE…KIER), 375–409 (LEQE…ASRD), and 466–518 (AMST…NERV). Over residues 375-401 (LEQERKRAQSEAEKLAKERQEAEEAKE) the composition is skewed to basic and acidic residues. S407 is subject to Phosphoserine. The span at 476–487 (AENEQDEQDENG) shows a compositional bias: acidic residues. Positions 492–518 (ADLRADAMAKDRSEEERTTEAEKNERV) are enriched in basic and acidic residues. Phosphoserine is present on S527. A Phosphothreonine; by ROCK2 and STK10 modification is found at T558.

As to quaternary structure, in resting T-cells, part of a PAG1-NHERF1-MSN complex which is disrupted upon TCR activation. Interacts with NHERF1. Interacts with PPP1R16B. Interacts with SELPLG and SYK; these interactions mediate the activation of SYK by SELPLG. Interacts with PDPN (via cytoplasmic domain); this interaction activates RHOA and promotes epithelial-mesenchymal transition. Interacts with SPN/CD43 cytoplasmic tail. Interacts with CD44. Interacts with ICAM2. Interacts with ICAM3 (via C-terminus). Interacts with PDZD8. Interacts with F-actin. Interacts with CD46. Interacts with PTPN6. (Microbial infection) Interacts with HIV-1 envelope protein gp120. In terms of processing, phosphorylation on Thr-558 is crucial for the formation of microvilli-like structures. Phosphorylation by ROCK2 suppresses the head-to-tail association of the N-terminal and C-terminal halves resulting in an opened conformation which is capable of actin and membrane-binding. Phosphorylation on Thr-558 by STK10 negatively regulates lymphocyte migration and polarization. Post-translationally, S-nitrosylation of Cys-117 is induced by interferon-gamma and oxidatively-modified low-densitity lipoprotein (LDL(ox)) implicating the iNOS-S100A8/9 transnitrosylase complex. In all tissues and cultured cells studied.

Its subcellular location is the cell membrane. The protein localises to the cytoplasm. The protein resides in the cytoskeleton. It is found in the apical cell membrane. It localises to the cell projection. Its subcellular location is the microvillus membrane. The protein localises to the microvillus. A head-to-tail association, of the N-terminal and C-terminal halves results in a closed conformation (inactive form) which is incapable of actin or membrane-binding. In terms of biological role, ezrin-radixin-moesin (ERM) family protein that connects the actin cytoskeleton to the plasma membrane and thereby regulates the structure and function of specific domains of the cell cortex. Tethers actin filaments by oscillating between a resting and an activated state providing transient interactions between moesin and the actin cytoskeleton. Once phosphorylated on its C-terminal threonine, moesin is activated leading to interaction with F-actin and cytoskeletal rearrangement. These rearrangements regulate many cellular processes, including cell shape determination, membrane transport, and signal transduction. The role of moesin is particularly important in immunity acting on both T and B-cells homeostasis and self-tolerance, regulating lymphocyte egress from lymphoid organs. Modulates phagolysosomal biogenesis in macrophages. Also participates in immunologic synapse formation. This is Moesin from Homo sapiens (Human).